The primary structure comprises 336 residues: Protein-glutamate methylesterase/protein-glutamine glutaminase 1 (336 aa).

Positions 2–119 (KIAIVNDMPM…GNAQEAAAPL (118 aa)) constitute a Response regulatory domain. Aspartate 53 is modified (4-aspartylphosphate). The 194-residue stretch at 143 to 336 (PLRSGAPRQS…APRLLEIFAK (194 aa)) folds into the CheB-type methylesterase domain. Active-site residues include serine 159, histidine 186, and aspartate 279.

It belongs to the CheB family. Phosphorylated by CheA. Phosphorylation of the N-terminal regulatory domain activates the methylesterase activity.

Its subcellular location is the cytoplasm. The enzyme catalyses [protein]-L-glutamate 5-O-methyl ester + H2O = L-glutamyl-[protein] + methanol + H(+). The catalysed reaction is L-glutaminyl-[protein] + H2O = L-glutamyl-[protein] + NH4(+). Its function is as follows. Involved in chemotaxis. Part of a chemotaxis signal transduction system that modulates chemotaxis in response to various stimuli. Catalyzes the demethylation of specific methylglutamate residues introduced into the chemoreceptors (methyl-accepting chemotaxis proteins or MCP) by CheR. Also mediates the irreversible deamidation of specific glutamine residues to glutamic acid. The chain is Protein-glutamate methylesterase/protein-glutamine glutaminase 1 from Pseudomonas fluorescens (strain ATCC BAA-477 / NRRL B-23932 / Pf-5).